Reading from the N-terminus, the 127-residue chain is Protein ApaG (127 aa).

Positions 3 to 127 (DDPRYRVEVE…FVLSVPRTLH (125 aa)) constitute an ApaG domain.

This Xanthomonas oryzae pv. oryzae (strain MAFF 311018) protein is Protein ApaG.